Reading from the N-terminus, the 215-residue chain is Protein C' (215 aa).

Disordered regions lie at residues 12–34 and 51–71; these read MPSF…SRSR and SEGT…QALP. The interval 15–22 is involved in self-degradation and in host STAT1 degradation; it reads FLKKILKL. Over residues 51-65 the composition is skewed to polar residues; the sequence is SEGTEAGSTTPSTLP.

Belongs to the respirovirus protein C family. In terms of assembly, the different isoforms interact (via C-terminus) with unphosphorylated and phosphorylated human STAT1 (via N-terminus), favoring the formation of parallel STAT1 homodimers. The different isoforms do not interact with host STAT2. C protein interacts with L protein; this interaction has an inhibitory effect on viral transcription and replication. In terms of processing, Y1 and Y2 proteins are produced not only by alternative initiation, but also by proteolytic cleavage of C'. Only alternative initiation is detected in vitro, whereas in vivo cleavage seems to be predominant.

It is found in the host cytoplasm. Functionally, the different products prevent the establishment of cellular antiviral state by blocking the interferon-alpha/beta (IFN-alpha/beta) and IFN-gamma signaling pathways. They inhibit IFN-alpha/beta induced tyrosine phosphorylation of STAT1 and STAT2. Blocking the IFN-alpha/beta pathway requires binding to STAT1 in the cytoplasm. They inhibit IFN-gamma induced serine phosphorylation of STAT1. Block the IFN-gamma pathway by binding to and stabilizing the parallel form of the STAT1 dimer, further inducing high-molecular-weight complex formation and inhibition of transcription by IFN-gamma. May also have a role in preventing the cell to enter apoptosis. Modulate regulation of viral transcription and replication. Overexpression inhibits the viral RNA polymerase. The absence of all C', C, Y1 and Y2 proteins leads to viral delayed growth. Plays an important role in virion particles release. Modulates virion shape. In Sendai virus (strain Harris) (SeV), this protein is Protein C' (P/V/C).